We begin with the raw amino-acid sequence, 601 residues long: Lanthanide-dependent methanol dehydrogenase (601 aa).

Residues 1 to 21 (MRAVHLLALGAGLAAASPALA) form the signal peptide. The cysteines at positions 124 and 125 are disulfide-linked. Pyrroloquinoline quinone-binding residues include R130, T174, S189, G190, and G191. A La(3+)-binding site is contributed by E192. C197 and C256 are oxidised to a cystine. W258 serves as a coordination point for pyrroloquinoline quinone. La(3+)-binding residues include N276, D318, and D320. Catalysis depends on D318, which acts as the Proton acceptor. R345 serves as a coordination point for pyrroloquinoline quinone. Residues C408 and C437 are joined by a disulfide bond. Residues W494 and W558 each coordinate pyrroloquinoline quinone.

The protein belongs to the bacterial PQQ dehydrogenase family. As to quaternary structure, homodimer. The cofactor is La(3+). Nd(3+) serves as cofactor. Pyrroloquinoline quinone is required as a cofactor.

Its subcellular location is the periplasm. The enzyme catalyses 2 Fe(III)-[cytochrome cL] + methanol = 2 Fe(II)-[cytochrome cL] + formaldehyde + 2 H(+). Catalyzes the oxidation of methanol to formaldehyde, but only in the presence of lanthanides (Ln). Contributes to methanol metabolism when La(3+) is present in the natural environment of the bacterium, allowing bacterial growth with methanol as carbon and energy source. Thereby is an essential enzyme for Ln-dependent methylotrophy. Uses a specific cytochrome cL (XoxG), encoded by the adjacent gene in the locus, as electron acceptor. Also plays a role in the transcriptional regulation of the mxa and xox1 operons, most likely acting as a lanthanide sensory module. Is also able to oxidize formaldehyde to formate in vitro, but this activity does not occur in vivo. The chain is Lanthanide-dependent methanol dehydrogenase from Methylorubrum extorquens (strain ATCC 14718 / DSM 1338 / JCM 2805 / NCIMB 9133 / AM1) (Methylobacterium extorquens).